The chain runs to 126 residues: Ribosome-binding factor A (126 aa).

This sequence belongs to the RbfA family. Monomer. Binds 30S ribosomal subunits, but not 50S ribosomal subunits or 70S ribosomes.

It is found in the cytoplasm. One of several proteins that assist in the late maturation steps of the functional core of the 30S ribosomal subunit. Associates with free 30S ribosomal subunits (but not with 30S subunits that are part of 70S ribosomes or polysomes). Required for efficient processing of 16S rRNA. May interact with the 5'-terminal helix region of 16S rRNA. The protein is Ribosome-binding factor A of Histophilus somni (strain 129Pt) (Haemophilus somnus).